The primary structure comprises 504 residues: Arabinose import ATP-binding protein AraG (504 aa).

2 consecutive ABC transporter domains span residues leucine 8 to arginine 243 and tyrosine 256 to valine 499. Residue glycine 40 to serine 47 participates in ATP binding.

It belongs to the ABC transporter superfamily. Arabinose importer (TC 3.A.1.2.2) family. In terms of assembly, the complex is composed of two ATP-binding proteins (AraG), two transmembrane proteins (AraH) and a solute-binding protein (AraF).

The protein localises to the cell inner membrane. The catalysed reaction is L-arabinose(out) + ATP + H2O = L-arabinose(in) + ADP + phosphate + H(+). Part of the ABC transporter complex AraFGH involved in arabinose import. Responsible for energy coupling to the transport system. The chain is Arabinose import ATP-binding protein AraG from Shigella flexneri.